The chain runs to 125 residues: MSDKYIGDSHLEETGEEKQDSQEKEAVTPEKAEEQKLKAKYPNLGQKPGGSDFLMKRLQKGQKYFDSGDYNMAKAKMKNKQLPCAGPDKNLVTGDHIPTPQDLPQRKSSLVTSKLAGHVEDLHQV.

Positions 1 to 37 are enriched in basic and acidic residues; that stretch reads MSDKYIGDSHLEETGEEKQDSQEKEAVTPEKAEEQKL. Residues 1-53 are disordered; the sequence is MSDKYIGDSHLEETGEEKQDSQEKEAVTPEKAEEQKLKAKYPNLGQKPGGSDF. Thr-28 is subject to Phosphothreonine; by CDK2. Ser-67 carries the post-translational modification Phosphoserine; by GWL. The segment at 81-108 is disordered; sequence QLPCAGPDKNLVTGDHIPTPQDLPQRKS. Phosphothreonine; by CDK2 is present on Thr-99. Ser-109 bears the Phosphoserine; by PKA mark.

The protein belongs to the endosulfine family. Phosphorylation at Ser-67 by gwl during mitosis is essential for interaction with ppp2r2d (PR55-delta) and subsequent inactivation of PP2A.

The protein localises to the cytoplasm. In terms of biological role, protein phosphatase inhibitor that specifically inhibits protein phosphatase 2A (PP2A) during mitosis. When phosphorylated at Ser-67 during mitosis, specifically interacts with ppp2r2d (PR55-delta) and inhibits its activity, leading to inactivation of PP2A, an essential condition to keep cyclin-B1-CDK1 activity high during M phase. The polypeptide is Alpha-endosulfine (ensa) (Xenopus tropicalis (Western clawed frog)).